Here is a 185-residue protein sequence, read N- to C-terminus: Ribosome-recycling factor (185 aa).

The protein belongs to the RRF family.

It is found in the cytoplasm. Its function is as follows. Responsible for the release of ribosomes from messenger RNA at the termination of protein biosynthesis. May increase the efficiency of translation by recycling ribosomes from one round of translation to another. This is Ribosome-recycling factor from Francisella tularensis subsp. tularensis (strain FSC 198).